Consider the following 215-residue polypeptide: Ras-related protein Rab-14 (215 aa).

A2 carries the post-translational modification N-acetylalanine. The GTP site is built by G21, V22, G23, K24, S25, C26, A38, D39, C40, H42, and T43. S25 provides a ligand contact to Mg(2+). The Switch 1 motif lies at 42 to 47 (HTIGVE). Residues T43 and D66 each coordinate Mg(2+). The Switch 2 motif lies at 68 to 77 (AGQERFRAVT). Positions 69, 124, 125, 127, 155, and 156 each coordinate GTP. The disordered stretch occupies residues 188-215 (SGVQHKPSAPQGGRLTSEPQPQREGCGC). S-geranylgeranyl cysteine attachment occurs at residues C213 and C215. The residue at position 215 (C215) is a Cysteine methyl ester.

This sequence belongs to the small GTPase superfamily. Rab family. Mg(2+) is required as a cofactor.

Its subcellular location is the recycling endosome. The protein localises to the early endosome membrane. The protein resides in the golgi apparatus membrane. It is found in the golgi apparatus. It localises to the trans-Golgi network membrane. Its subcellular location is the cytoplasmic vesicle. The protein localises to the phagosome. The enzyme catalyses GTP + H2O = GDP + phosphate + H(+). Regulated by guanine nucleotide exchange factors (GEFs) including DENND6A and DENND6B which promote the exchange of bound GDP for free GTP. Regulated by GTPase activating proteins (GAPs) which increase the GTP hydrolysis activity. Inhibited by GDP dissociation inhibitors (GDIs) which prevent Rab-GDP dissociation. Functionally, the small GTPases Rab are key regulators of intracellular membrane trafficking, from the formation of transport vesicles to their fusion with membranes. Rabs cycle between an inactive GDP-bound form and an active GTP-bound form that is able to recruit to membranes different set of downstream effectors directly responsible for vesicle formation, movement, tethering and fusion. Involved in membrane trafficking between the Golgi complex and endosomes during early embryonic development. Regulates the Golgi to endosome transport of FGFR-containing vesicles during early development, a key process for developing basement membrane and epiblast and primitive endoderm lineages during early postimplantation development. May act by modulating the kinesin KIF16B-cargo association to endosomes. Regulates, together with its guanine nucleotide exchange factor DENND6A, the specific endocytic transport of ADAM10, N-cadherin/CDH2 shedding and cell-cell adhesion. Mediates endosomal tethering and fusion through the interaction with RUFY1 and RAB4B. Interaction with RAB11FIP1 may function in the process of neurite formation. The protein is Ras-related protein Rab-14 (RAB14) of Gallus gallus (Chicken).